A 283-amino-acid chain; its full sequence is 4-hydroxy-3-methylbut-2-enyl diphosphate reductase (283 aa).

[4Fe-4S] cluster is bound at residue cysteine 12. The (2E)-4-hydroxy-3-methylbut-2-enyl diphosphate site is built by histidine 40 and histidine 73. Dimethylallyl diphosphate-binding residues include histidine 40 and histidine 73. The isopentenyl diphosphate site is built by histidine 40 and histidine 73. Residue cysteine 95 participates in [4Fe-4S] cluster binding. Histidine 123 lines the (2E)-4-hydroxy-3-methylbut-2-enyl diphosphate pocket. Histidine 123 contacts dimethylallyl diphosphate. An isopentenyl diphosphate-binding site is contributed by histidine 123. Catalysis depends on glutamate 125, which acts as the Proton donor. Residue threonine 161 participates in (2E)-4-hydroxy-3-methylbut-2-enyl diphosphate binding. Residue cysteine 189 coordinates [4Fe-4S] cluster. Positions 217, 219, and 261 each coordinate (2E)-4-hydroxy-3-methylbut-2-enyl diphosphate. 3 residues coordinate dimethylallyl diphosphate: serine 217, asparagine 219, and serine 261. Residues serine 217, asparagine 219, and serine 261 each coordinate isopentenyl diphosphate.

It belongs to the IspH family. The cofactor is [4Fe-4S] cluster.

The catalysed reaction is isopentenyl diphosphate + 2 oxidized [2Fe-2S]-[ferredoxin] + H2O = (2E)-4-hydroxy-3-methylbut-2-enyl diphosphate + 2 reduced [2Fe-2S]-[ferredoxin] + 2 H(+). It carries out the reaction dimethylallyl diphosphate + 2 oxidized [2Fe-2S]-[ferredoxin] + H2O = (2E)-4-hydroxy-3-methylbut-2-enyl diphosphate + 2 reduced [2Fe-2S]-[ferredoxin] + 2 H(+). It functions in the pathway isoprenoid biosynthesis; dimethylallyl diphosphate biosynthesis; dimethylallyl diphosphate from (2E)-4-hydroxy-3-methylbutenyl diphosphate: step 1/1. The protein operates within isoprenoid biosynthesis; isopentenyl diphosphate biosynthesis via DXP pathway; isopentenyl diphosphate from 1-deoxy-D-xylulose 5-phosphate: step 6/6. Catalyzes the conversion of 1-hydroxy-2-methyl-2-(E)-butenyl 4-diphosphate (HMBPP) into a mixture of isopentenyl diphosphate (IPP) and dimethylallyl diphosphate (DMAPP). Acts in the terminal step of the DOXP/MEP pathway for isoprenoid precursor biosynthesis. The chain is 4-hydroxy-3-methylbut-2-enyl diphosphate reductase from Citrifermentans bemidjiense (strain ATCC BAA-1014 / DSM 16622 / JCM 12645 / Bem) (Geobacter bemidjiensis).